The sequence spans 124 residues: Small ribosomal subunit protein uS12 (124 aa).

Aspartate 89 bears the 3-methylthioaspartic acid mark.

The protein belongs to the universal ribosomal protein uS12 family. As to quaternary structure, part of the 30S ribosomal subunit. Contacts proteins S8 and S17. May interact with IF1 in the 30S initiation complex.

In terms of biological role, with S4 and S5 plays an important role in translational accuracy. Functionally, interacts with and stabilizes bases of the 16S rRNA that are involved in tRNA selection in the A site and with the mRNA backbone. Located at the interface of the 30S and 50S subunits, it traverses the body of the 30S subunit contacting proteins on the other side and probably holding the rRNA structure together. The combined cluster of proteins S8, S12 and S17 appears to hold together the shoulder and platform of the 30S subunit. This is Small ribosomal subunit protein uS12 from Aeromonas hydrophila subsp. hydrophila (strain ATCC 7966 / DSM 30187 / BCRC 13018 / CCUG 14551 / JCM 1027 / KCTC 2358 / NCIMB 9240 / NCTC 8049).